We begin with the raw amino-acid sequence, 371 residues long: Glutamate 5-kinase (371 aa).

Residue Lys10 participates in ATP binding. Residues Ser50, Asp137, and Asn149 each contribute to the substrate site. Residues 169–170 and 208–214 contribute to the ATP site; these read SD and TGGMYTK. One can recognise a PUA domain in the interval 274–352; that stretch reads QGKVYIDDGA…EEIKNILGED (79 aa).

It belongs to the glutamate 5-kinase family.

The protein localises to the cytoplasm. It catalyses the reaction L-glutamate + ATP = L-glutamyl 5-phosphate + ADP. The protein operates within amino-acid biosynthesis; L-proline biosynthesis; L-glutamate 5-semialdehyde from L-glutamate: step 1/2. Its function is as follows. Catalyzes the transfer of a phosphate group to glutamate to form L-glutamate 5-phosphate. The protein is Glutamate 5-kinase of Dictyoglomus thermophilum (strain ATCC 35947 / DSM 3960 / H-6-12).